A 93-amino-acid polypeptide reads, in one-letter code: MLTVNEYFDGKVKSVAFQSSTLPATIGVISAGEYEFGTSEKETMTVVSGELTVLLPGQQDWQTFGAGESFEVAGQASFKAKTDADTAYLCTYG.

The protein belongs to the nucleoside phosphorylase PpnP family.

It catalyses the reaction a purine D-ribonucleoside + phosphate = a purine nucleobase + alpha-D-ribose 1-phosphate. It carries out the reaction adenosine + phosphate = alpha-D-ribose 1-phosphate + adenine. The catalysed reaction is cytidine + phosphate = cytosine + alpha-D-ribose 1-phosphate. The enzyme catalyses guanosine + phosphate = alpha-D-ribose 1-phosphate + guanine. It catalyses the reaction inosine + phosphate = alpha-D-ribose 1-phosphate + hypoxanthine. It carries out the reaction thymidine + phosphate = 2-deoxy-alpha-D-ribose 1-phosphate + thymine. The catalysed reaction is uridine + phosphate = alpha-D-ribose 1-phosphate + uracil. The enzyme catalyses xanthosine + phosphate = alpha-D-ribose 1-phosphate + xanthine. Its function is as follows. Catalyzes the phosphorolysis of diverse nucleosides, yielding D-ribose 1-phosphate and the respective free bases. Can use uridine, adenosine, guanosine, cytidine, thymidine, inosine and xanthosine as substrates. Also catalyzes the reverse reactions. The protein is Pyrimidine/purine nucleoside phosphorylase of Marinobacter nauticus (strain ATCC 700491 / DSM 11845 / VT8) (Marinobacter aquaeolei).